The following is a 118-amino-acid chain: Large ribosomal subunit protein bL20 (118 aa).

The protein belongs to the bacterial ribosomal protein bL20 family.

Functionally, binds directly to 23S ribosomal RNA and is necessary for the in vitro assembly process of the 50S ribosomal subunit. It is not involved in the protein synthesizing functions of that subunit. The sequence is that of Large ribosomal subunit protein bL20 from Cupriavidus metallidurans (strain ATCC 43123 / DSM 2839 / NBRC 102507 / CH34) (Ralstonia metallidurans).